The following is a 126-amino-acid chain: Urease subunit beta (126 aa).

The protein belongs to the urease beta subunit family. As to quaternary structure, heterotrimer of UreA (gamma), UreB (beta) and UreC (alpha) subunits. Three heterotrimers associate to form the active enzyme.

The protein resides in the cytoplasm. It catalyses the reaction urea + 2 H2O + H(+) = hydrogencarbonate + 2 NH4(+). It participates in nitrogen metabolism; urea degradation; CO(2) and NH(3) from urea (urease route): step 1/1. The polypeptide is Urease subunit beta (Sporosarcina pasteurii (Bacillus pasteurii)).